The primary structure comprises 375 residues: 23S rRNA (uracil(747)-C(5))-methyltransferase RlmC (375 aa).

[4Fe-4S] cluster-binding residues include Cys-3, Cys-11, Cys-14, and Cys-87. Residues Gln-212, Phe-241, Glu-262, and Asn-307 each coordinate S-adenosyl-L-methionine. Cys-334 (nucleophile) is an active-site residue.

This sequence belongs to the class I-like SAM-binding methyltransferase superfamily. RNA M5U methyltransferase family. RlmC subfamily.

The catalysed reaction is uridine(747) in 23S rRNA + S-adenosyl-L-methionine = 5-methyluridine(747) in 23S rRNA + S-adenosyl-L-homocysteine + H(+). Catalyzes the formation of 5-methyl-uridine at position 747 (m5U747) in 23S rRNA. The chain is 23S rRNA (uracil(747)-C(5))-methyltransferase RlmC from Salmonella enteritidis PT4 (strain P125109).